The primary structure comprises 286 residues: Sulfur carrier protein FdhD (286 aa).

Residue C110 is the Cysteine persulfide intermediate of the active site. 247-252 (FARGEK) is a binding site for Mo-bis(molybdopterin guanine dinucleotide).

The protein belongs to the FdhD family.

Its subcellular location is the cytoplasm. Required for formate dehydrogenase (FDH) activity. Acts as a sulfur carrier protein that transfers sulfur from IscS to the molybdenum cofactor prior to its insertion into FDH. The chain is Sulfur carrier protein FdhD from Wolinella succinogenes (strain ATCC 29543 / DSM 1740 / CCUG 13145 / JCM 31913 / LMG 7466 / NCTC 11488 / FDC 602W) (Vibrio succinogenes).